The sequence spans 183 residues: Inosine triphosphate pyrophosphatase (183 aa).

Position 8 to 13 (8 to 13) interacts with ITP; sequence TGNKNK. A Mg(2+)-binding site is contributed by glutamate 36. Residues lysine 48, 64-65, lysine 81, 140-143, lysine 161, and 166-167 each bind ITP; these read DT, FGWD, and HR.

It belongs to the HAM1 NTPase family. In terms of assembly, homodimer. Mg(2+) serves as cofactor. Requires Mn(2+) as cofactor.

It localises to the cytoplasm. The protein resides in the nucleus. It catalyses the reaction ITP + H2O = IMP + diphosphate + H(+). The catalysed reaction is dITP + H2O = dIMP + diphosphate + H(+). It carries out the reaction XTP + H2O = XMP + diphosphate + H(+). Pyrophosphatase that hydrolyzes non-canonical purine nucleotides such as inosine triphosphate (ITP), deoxyinosine triphosphate (dITP) or xanthosine 5'-triphosphate (XTP) to their respective monophosphate derivatives. The enzyme does not distinguish between the deoxy- and ribose forms. Probably excludes non-canonical purines from RNA and DNA precursor pools, thus preventing their incorporation into RNA and DNA and avoiding chromosomal lesions. The chain is Inosine triphosphate pyrophosphatase from Emericella nidulans (strain FGSC A4 / ATCC 38163 / CBS 112.46 / NRRL 194 / M139) (Aspergillus nidulans).